A 502-amino-acid chain; its full sequence is Lysine--tRNA ligase (502 aa).

A disordered region spans residues 1–22 (MSDHEQAQAQSQDENQIMAERR). Glu-413 and Glu-420 together coordinate Mg(2+).

Belongs to the class-II aminoacyl-tRNA synthetase family. Homodimer. Mg(2+) is required as a cofactor.

The protein resides in the cytoplasm. The enzyme catalyses tRNA(Lys) + L-lysine + ATP = L-lysyl-tRNA(Lys) + AMP + diphosphate. The chain is Lysine--tRNA ligase from Chromobacterium violaceum (strain ATCC 12472 / DSM 30191 / JCM 1249 / CCUG 213 / NBRC 12614 / NCIMB 9131 / NCTC 9757 / MK).